The chain runs to 354 residues: Uroporphyrinogen decarboxylase (354 aa).

Residues 27-31 (RQAGR), Asp77, Tyr154, Thr209, and His327 each bind substrate.

This sequence belongs to the uroporphyrinogen decarboxylase family. As to quaternary structure, homodimer.

The protein resides in the cytoplasm. The catalysed reaction is uroporphyrinogen III + 4 H(+) = coproporphyrinogen III + 4 CO2. It functions in the pathway porphyrin-containing compound metabolism; protoporphyrin-IX biosynthesis; coproporphyrinogen-III from 5-aminolevulinate: step 4/4. In terms of biological role, catalyzes the decarboxylation of four acetate groups of uroporphyrinogen-III to yield coproporphyrinogen-III. This Escherichia coli O17:K52:H18 (strain UMN026 / ExPEC) protein is Uroporphyrinogen decarboxylase.